The chain runs to 366 residues: Putative neutrophil cytosol factor 1C (366 aa).

Residues 1–101 (MYMFLVKWQD…DFFKVRPDDL (101 aa)) form the PX domain. 2 consecutive SH3 domains span residues 132–191 (IILQ…PLDS) and 202–261 (YAGE…KSGQ). A disordered region spans residues 261-366 (QDVSQAQRQI…STKRKLASAV (106 aa)). Ser279 and Ser280 each carry phosphoserine. Over residues 285–294 (HSIHQRSRKR) the composition is skewed to basic residues. 4 positions are modified to phosphoserine: Ser296, Ser304, Ser321, and Ser324.

The protein localises to the cytoplasm. May be required for activation of the latent NADPH oxidase (necessary for superoxide production). This is Putative neutrophil cytosol factor 1C (NCF1C) from Homo sapiens (Human).